Here is a 502-residue protein sequence, read N- to C-terminus: Lipoprotein LipO (502 aa).

The first 21 residues, 1–21 (MKIRMRKKWMALPLAAMMIAG), serve as a signal peptide directing secretion. Cysteine 22 is lipidated: N-palmitoyl cysteine. The S-diacylglycerol cysteine moiety is linked to residue cysteine 22.

The protein resides in the cell membrane. The chain is Lipoprotein LipO (lipO) from Bacillus subtilis (strain 168).